We begin with the raw amino-acid sequence, 429 residues long: MPIAMVMAEASARHGVEILCIGTELLLGNILNSNARWLAEELAALGLPHYRQTVVGDNVERLKESVLEAVDRSRILITTGGLGPTPDDLTTETLAAAFDTPLEERPELWFEIQAKLTAGGSISAISNRKQALFPRGAEILPNPSGTAPGMIWCPRPGFTVLTFPGVPSEMKQMWSQTAVPWLRQHGGLADIFVSRLLRFTGIAESTLAEEVADLLEQGNPTVAPYAGLGEVKLRITARGATVEQARQLLDPVDAALRHRTGLFCYGSDDESLASVVLDLLRQRGETVVVAESCTGGGVGAALAAVPRASEVFLGGVIAYSNAIKQALLGISTDLLHQHGAVSDPVVRAMAEGARQRLGADWSIAVSGVAGPGGGTHAKPVGLVHIAVAGPHGCDASPVQFGVRRGRLAIQELSVVRSLDQLRRLLLDGS.

This sequence belongs to the CinA family.

The chain is CinA-like protein from Prochlorococcus marinus (strain MIT 9313).